The following is a 394-amino-acid chain: Acetyl-CoA acetyltransferase (394 aa).

Catalysis depends on C88, which acts as the Acyl-thioester intermediate. Active-site proton acceptor residues include H349 and C379.

This sequence belongs to the thiolase-like superfamily. Thiolase family.

It is found in the cytoplasm. It catalyses the reaction 2 acetyl-CoA = acetoacetyl-CoA + CoA. The protein operates within metabolic intermediate biosynthesis; (R)-mevalonate biosynthesis; (R)-mevalonate from acetyl-CoA: step 1/3. In Escherichia coli (strain K12), this protein is Acetyl-CoA acetyltransferase (atoB).